The sequence spans 269 residues: Cytochrome c oxidase subunit 3 (269 aa).

The next 7 membrane-spanning stretches (helical) occupy residues 21–41, 45–65, 90–110, 127–147, 167–187, 204–224, and 247–267; these read PWPI…GLTM, IVGN…MTMW, GFLL…WAYF, VGIT…ILLA, ALNG…CQYI, VFFA…IMLA, and ILYL…MYWW.

This sequence belongs to the cytochrome c oxidase subunit 3 family. Component of the cytochrome c oxidase (complex IV, CIV), a multisubunit enzyme composed of a catalytic core of 3 subunits and several supernumerary subunits. The complex exists as a monomer or a dimer and forms supercomplexes (SCs) in the inner mitochondrial membrane with ubiquinol-cytochrome c oxidoreductase (cytochrome b-c1 complex, complex III, CIII).

Its subcellular location is the mitochondrion inner membrane. The catalysed reaction is 4 Fe(II)-[cytochrome c] + O2 + 8 H(+)(in) = 4 Fe(III)-[cytochrome c] + 2 H2O + 4 H(+)(out). In terms of biological role, component of the cytochrome c oxidase, the last enzyme in the mitochondrial electron transport chain which drives oxidative phosphorylation. The respiratory chain contains 3 multisubunit complexes succinate dehydrogenase (complex II, CII), ubiquinol-cytochrome c oxidoreductase (cytochrome b-c1 complex, complex III, CIII) and cytochrome c oxidase (complex IV, CIV), that cooperate to transfer electrons derived from NADH and succinate to molecular oxygen, creating an electrochemical gradient over the inner membrane that drives transmembrane transport and the ATP synthase. Cytochrome c oxidase is the component of the respiratory chain that catalyzes the reduction of oxygen to water. Electrons originating from reduced cytochrome c in the intermembrane space (IMS) are transferred via the dinuclear copper A center (CU(A)) of subunit 2 and heme A of subunit 1 to the active site in subunit 1, a binuclear center (BNC) formed by heme A3 and copper B (CU(B)). The BNC reduces molecular oxygen to 2 water molecules using 4 electrons from cytochrome c in the IMS and 4 protons from the mitochondrial matrix. The chain is Cytochrome c oxidase subunit 3 (COX3) from Wickerhamomyces canadensis (Yeast).